The following is a 414-amino-acid chain: Schlafen-like protein 1 (414 aa).

The disordered stretch occupies residues 141 to 203; that stretch reads LHHREQDDSG…ISQNRPSGVR (63 aa). A compositionally biased stretch (pro residues) spans 154-185; it reads SHSPGPSPGPSPGPSPGFRRPPLPQLADPPPN. 268–275 is a binding site for ATP; the sequence is GVEDSGLV. Residues 373–407 are a coiled coil; the sequence is RQKWTAELSKLEEKVDVLTLEKEQLQEQLRQRQTL.

It belongs to the Schlafen family. Subgroup I subfamily.

This is Schlafen-like protein 1 (Slfnl1) from Rattus norvegicus (Rat).